A 244-amino-acid polypeptide reads, in one-letter code: MSKFYIENINLLNSEKKNNILSELNLLLSNYSAEERISWALSHLPHTQIMSSSFGIQSTVLLHLIIKKKPDIPVVLIDTGYLFPETYNFIDFLTNKFHLNLKVFRSTISSAWQEARYGKLWEKGIEGIDFYNNINKVQPMNFALNELSVQTWFAGLRRDQSKSRNLLPYLSIKKGIFKILPILDWSKDKIKDYLKENNLDTHPLYNNGYSSVGDTHTTKKHMPGMLEEETRFFGLKRECGLHEN.

Cysteine 239 functions as the Nucleophile; cysteine thiosulfonate intermediate in the catalytic mechanism.

This sequence belongs to the PAPS reductase family. CysH subfamily.

The protein resides in the cytoplasm. The enzyme catalyses [thioredoxin]-disulfide + sulfite + adenosine 3',5'-bisphosphate + 2 H(+) = [thioredoxin]-dithiol + 3'-phosphoadenylyl sulfate. Its pathway is sulfur metabolism; hydrogen sulfide biosynthesis; sulfite from sulfate: step 3/3. In terms of biological role, catalyzes the formation of sulfite from phosphoadenosine 5'-phosphosulfate (PAPS) using thioredoxin as an electron donor. The chain is Phosphoadenosine 5'-phosphosulfate reductase from Buchnera aphidicola subsp. Acyrthosiphon pisum (strain Tuc7).